We begin with the raw amino-acid sequence, 372 residues long: Phospho-N-acetylmuramoyl-pentapeptide-transferase (372 aa).

10 consecutive transmembrane segments (helical) span residues Leu-2–Leu-22, Thr-71–Ala-91, Val-98–Leu-118, Tyr-134–Leu-154, Met-176–Ile-196, Gly-211–Ser-231, Val-251–His-271, Val-275–Met-295, Ile-300–Val-320, and Gln-349–Leu-369.

This sequence belongs to the glycosyltransferase 4 family. MraY subfamily. Requires Mg(2+) as cofactor.

The protein localises to the cell inner membrane. It carries out the reaction UDP-N-acetyl-alpha-D-muramoyl-L-alanyl-gamma-D-glutamyl-meso-2,6-diaminopimeloyl-D-alanyl-D-alanine + di-trans,octa-cis-undecaprenyl phosphate = di-trans,octa-cis-undecaprenyl diphospho-N-acetyl-alpha-D-muramoyl-L-alanyl-D-glutamyl-meso-2,6-diaminopimeloyl-D-alanyl-D-alanine + UMP. It functions in the pathway cell wall biogenesis; peptidoglycan biosynthesis. Functionally, catalyzes the initial step of the lipid cycle reactions in the biosynthesis of the cell wall peptidoglycan: transfers peptidoglycan precursor phospho-MurNAc-pentapeptide from UDP-MurNAc-pentapeptide onto the lipid carrier undecaprenyl phosphate, yielding undecaprenyl-pyrophosphoryl-MurNAc-pentapeptide, known as lipid I. This Psychrobacter cryohalolentis (strain ATCC BAA-1226 / DSM 17306 / VKM B-2378 / K5) protein is Phospho-N-acetylmuramoyl-pentapeptide-transferase.